The chain runs to 280 residues: MLWLLVLTAPWLGGSVPISPDPGLRHEQVGIVGGCKVPARRYPWQVSLRFHGMGSGQWQHICGGSLIHPQWVLTAAHCVELEGLEAATLRVQVGQLRLYDHDQLCNVTEIIRHPNFNMSWYGWDSADIALLKLEAPLTLSEDVNLVSLPSPSLIVPPGMLCWVTGWGDIADHTPLPPPYHLQEVEVPIVGNRECNCHYQTILEQDDEVIKQDMLCAGSEGHDSCQMDSGGPLVCRWKCTWIQVGVVSWGYGCGYNLPGVYARVTSYVSWIHQHIPLSPGP.

The N-terminal stretch at 1–15 (MLWLLVLTAPWLGGS) is a signal peptide. The propeptide occupies 16–30 (VPISPDPGLRHEQVG). The 245-residue stretch at 31–275 (IVGGCKVPAR…YVSWIHQHIP (245 aa)) folds into the Peptidase S1 domain. Cys-62 and Cys-78 are joined by a disulfide. His-77 acts as the Charge relay system in catalysis. N-linked (GlcNAc...) asparagine glycans are attached at residues Asn-106 and Asn-117. The Charge relay system role is filled by Asp-127. 3 disulfide bridges follow: Cys-161–Cys-234, Cys-194–Cys-215, and Cys-224–Cys-252. Ser-228 functions as the Charge relay system in the catalytic mechanism.

Belongs to the peptidase S1 family. Oligomer; disulfide-linked. Post-translationally, N-glycosylated. In terms of tissue distribution, mononuclear cells within skin, intestine, trachea and lung parenchyma, and polymorphonuclear leukocytes within capillaries and blood.

The protein localises to the cytoplasm. Inhibited by leupeptin and bis(5-amidino-2-benzimidazolyl)methane (BABIM). In terms of biological role, trypsin-like serine protease. Has a preference for extended substrates with basic residues at the P1 position; Arg is preferred over Lys. Active towards calcitonin gene-related peptide and gelatin. Not active towards substance P, vasoactive intestinal peptide, type I collagen or azocasein. In Canis lupus familiaris (Dog), this protein is Mastin.